A 443-amino-acid chain; its full sequence is ATP-dependent protease ATPase subunit HslU (443 aa).

ATP is bound by residues Val-18, 60–65 (GVGKTE), Asp-256, Glu-321, and Arg-393.

It belongs to the ClpX chaperone family. HslU subfamily. As to quaternary structure, a double ring-shaped homohexamer of HslV is capped on each side by a ring-shaped HslU homohexamer. The assembly of the HslU/HslV complex is dependent on binding of ATP.

The protein localises to the cytoplasm. In terms of biological role, ATPase subunit of a proteasome-like degradation complex; this subunit has chaperone activity. The binding of ATP and its subsequent hydrolysis by HslU are essential for unfolding of protein substrates subsequently hydrolyzed by HslV. HslU recognizes the N-terminal part of its protein substrates and unfolds these before they are guided to HslV for hydrolysis. In Azoarcus sp. (strain BH72), this protein is ATP-dependent protease ATPase subunit HslU.